Reading from the N-terminus, the 252-residue chain is Ribosomal RNA small subunit methyltransferase J (252 aa).

S-adenosyl-L-methionine is bound by residues 104 to 105 (RD), 120 to 121 (ER), 156 to 157 (SS), and D174.

It belongs to the methyltransferase superfamily. RsmJ family.

It localises to the cytoplasm. The enzyme catalyses guanosine(1516) in 16S rRNA + S-adenosyl-L-methionine = N(2)-methylguanosine(1516) in 16S rRNA + S-adenosyl-L-homocysteine + H(+). Its function is as follows. Specifically methylates the guanosine in position 1516 of 16S rRNA. This chain is Ribosomal RNA small subunit methyltransferase J, found in Yersinia enterocolitica serotype O:8 / biotype 1B (strain NCTC 13174 / 8081).